An 839-amino-acid polypeptide reads, in one-letter code: uncharacterized protein (839 aa).

This is an uncharacterized protein from Mycoplasma pneumoniae (strain ATCC 29342 / M129 / Subtype 1) (Mycoplasmoides pneumoniae).